The primary structure comprises 650 residues: Glycoprotein antigen BM86 (650 aa).

A signal peptide spans 1–19 (MRGIALFVAAVSLIVEGTA). 2 EGF-like domains span residues 20-66 (ESSI…KQCE) and 67-104 (YKDT…LQCK). Intrachain disulfides connect cysteine 24/cysteine 37, cysteine 32/cysteine 49, cysteine 51/cysteine 65, cysteine 71/cysteine 81, cysteine 76/cysteine 91, and cysteine 93/cysteine 103. N-linked (GlcNAc...) asparagine glycosylation is found at asparagine 141 and asparagine 182. 3 consecutive EGF-like domains span residues 205–247 (CINA…ITCK), 251–292 (HTVS…DTCI), and 291–335 (CISD…NECL). Disulfide bonds link cysteine 209-cysteine 222, cysteine 218-cysteine 231, cysteine 233-cysteine 246, cysteine 255-cysteine 269, cysteine 263-cysteine 278, cysteine 280-cysteine 291, cysteine 295-cysteine 307, cysteine 300-cysteine 316, and cysteine 318-cysteine 334. Asparagine 348 and asparagine 382 each carry an N-linked (GlcNAc...) asparagine glycan. 2 consecutive EGF-like domains span residues 482-530 (RRSV…IGCI) and 531-568 (ERTT…HECY). 6 disulfides stabilise this stretch: cysteine 486-cysteine 500, cysteine 492-cysteine 516, cysteine 518-cysteine 529, cysteine 535-cysteine 550, cysteine 543-cysteine 559, and cysteine 561-cysteine 567. Residues 603-628 (KSEATTAATTTTKAKDKDPDPGKSSA) form a disordered region. Serine 627 carries GPI-anchor amidated serine lipidation. Positions 628 to 650 (AAAVSATGLLLLLAATSVTAASL) are cleaved as a propeptide — removed in mature form.

It localises to the cell membrane. The protein is Glycoprotein antigen BM86 of Rhipicephalus microplus (Cattle tick).